Here is a 91-residue protein sequence, read N- to C-terminus: Uteroglobin (91 aa).

Residues 1 to 21 (MKLAVTLTLVTLALCCSSASA) form the signal peptide.

The protein belongs to the secretoglobin family. In terms of assembly, antiparallel homodimer; disulfide-linked. Interaction with LMBR1L has been observed in PubMed:16423471, but not in PubMed:23964685. Club cells (nonciliated cells of the surface epithelium of the pulmonary airways).

The protein resides in the secreted. Binds phosphatidylcholine, phosphatidylinositol, polychlorinated biphenyls (PCB) and weakly progesterone, potent inhibitor of phospholipase A2. The protein is Uteroglobin (SCGB1A1) of Homo sapiens (Human).